Here is a 253-residue protein sequence, read N- to C-terminus: Chloride intracellular channel protein 4 (253 aa).

Position 2 is an N-acetylalanine (A2). A required for insertion into the membrane region spans residues 2–101 (ALSMPLNGLK…EEFLEEVLCP (100 aa)). At S4 the chain carries Phosphoserine. K24 bears the N6-acetyllysine mark. Residues 35–38 (CPFS) carry the G-site motif. A helical transmembrane segment spans residues 37–57 (FSQRLFMILWLKGVVFSVTTV). Residues 81–244 (NSEVKTDVNK…PSDKEVEIAY (164 aa)) enclose the GST C-terminal domain. K130 carries the N6-acetyllysine modification. A phosphoserine mark is found at S132, S167, and S236. Y244 is subject to Phosphotyrosine.

It belongs to the chloride channel CLIC family. Monomer. Interacts with HRH30. Interacts with AKAP9. In terms of tissue distribution, detected in blood vessels in the retina (at protein level). Expressed to the greatest extent in vivo in heart, lung, liver, kidney, and skin.

The protein localises to the cytoplasm. The protein resides in the cytoskeleton. It is found in the microtubule organizing center. Its subcellular location is the centrosome. It localises to the cytoplasmic vesicle membrane. The protein localises to the nucleus. The protein resides in the cell membrane. It is found in the mitochondrion. Its subcellular location is the cell junction. It catalyses the reaction chloride(in) = chloride(out). It carries out the reaction thiocyanate(in) = thiocyanate(out). The catalysed reaction is nitrate(in) = nitrate(out). The enzyme catalyses iodide(out) = iodide(in). It catalyses the reaction bromide(in) = bromide(out). It carries out the reaction fluoride(in) = fluoride(out). The catalysed reaction is choline(out) = choline(in). Its function is as follows. In the soluble state, catalyzes glutaredoxin-like thiol disulfide exchange reactions with reduced glutathione as electron donor. Can insert into membranes and form voltage-dependent multi-ion conductive channels. Membrane insertion seems to be redox-regulated and may occur only under oxidizing conditions. Has alternate cellular functions like a potential role in angiogenesis or in maintaining apical-basolateral membrane polarity during mitosis and cytokinesis. Could also promote endothelial cell proliferation and regulate endothelial morphogenesis (tubulogenesis). Promotes cell-surface expression of HRH3. The polypeptide is Chloride intracellular channel protein 4 (Clic4) (Mus musculus (Mouse)).